We begin with the raw amino-acid sequence, 219 residues long: Cytidylate kinase (219 aa).

Position 21 to 29 (21 to 29) interacts with ATP; that stretch reads GPAASGKGT.

The protein belongs to the cytidylate kinase family. Type 1 subfamily.

It localises to the cytoplasm. It carries out the reaction CMP + ATP = CDP + ADP. It catalyses the reaction dCMP + ATP = dCDP + ADP. In Rickettsia akari (strain Hartford), this protein is Cytidylate kinase.